The following is a 444-amino-acid chain: Elongation factor 1-alpha (444 aa).

Residues 15 to 236 (KPHLNLAVIG…ALDTFQPPPR (222 aa)) form the tr-type G domain. A G1 region spans residues 24–31 (GHVDNGKS). Residue 24-31 (GHVDNGKS) participates in GTP binding. Ser31 contributes to the Mg(2+) binding site. Residues 80–84 (GVTIE) are G2. A G3 region spans residues 101 to 104 (DLPG). GTP is bound by residues 101–105 (DLPGH) and 163–166 (NKMD). The tract at residues 163–166 (NKMD) is G4. The G5 stretch occupies residues 202-204 (SAI).

It belongs to the TRAFAC class translation factor GTPase superfamily. Classic translation factor GTPase family. EF-Tu/EF-1A subfamily.

The protein localises to the cytoplasm. It carries out the reaction GTP + H2O = GDP + phosphate + H(+). Its function is as follows. GTP hydrolase that promotes the GTP-dependent binding of aminoacyl-tRNA to the A-site of ribosomes during protein biosynthesis. The protein is Elongation factor 1-alpha of Pyrobaculum islandicum (strain DSM 4184 / JCM 9189 / GEO3).